Reading from the N-terminus, the 1411-residue chain is Alpha-latroinsectotoxin-Lt1a (1411 aa).

Residues Ala-1 to Arg-35 constitute a propeptide that is removed on maturation. Positions Ala-245–Val-264 are helix H8 is the probable transmembrane region of the tetrameric pore inserted in the target cell membrane. ANK repeat units follow at residues Asp-462–Glu-495, Leu-499–Glu-528, Asn-533–Val-562, Asp-567–Ala-597, Ser-601–Ile-630, Val-634–Asp-663, Asn-667–Ala-697, Lys-702–Leu-732, Gly-736–Arg-765, Lys-769–Asp-798, Ser-802–Ala-831, Asn-835–Asn-864, Arg-869–Glu-898, Asn-902–Leu-931, Glu-935–Ala-965, Arg-968–Ser-999, Glu-1000–Glu-1029, Gln-1080–Gln-1109, Asp-1112–Thr-1142, and Glu-1146–Ala-1175. Positions Gln-1196–Lys-1411 are excised as a propeptide. Positions Asp-1230–Glu-1249 are enriched in polar residues. The disordered stretch occupies residues Asp-1230–Ser-1254. An ANK 21 repeat occupies Asn-1331–Lys-1361.

Belongs to the cationic peptide 01 (latrotoxin) family. 02 (alpha-latroinsectotoxin) subfamily. As to quaternary structure, homotetramer in membranes. As to expression, expressed by the venom gland.

It is found in the secreted. Its subcellular location is the target cell membrane. Its function is as follows. Insecticidal presynaptic neurotoxin that induces massive neurotransmitter release at insect (but not vertebrate) neuromuscular junctions. Native toxin forms cation-permeable pores (with high permeability to calcium) in lipid membranes locust muscle membrane and artificial lipid bilayers. May bind to insect neurexin-1 homolog, insect adhesion G protein-coupled receptor L1 homolog, and insect receptor-type tyrosine-protein phosphatase S homolog, and induces neurotransmitter exocytosis both by forming tetrameric pores in membranes and signaling via G protein-coupled receptor. Oligomerization is a process independent of divalent cations. The toxin forms channels with 0.55-0.58 nm entrance diameter and a relatively small conductance in planar phospholipid membranes. This is Alpha-latroinsectotoxin-Lt1a from Latrodectus tredecimguttatus (Mediterranean black widow spider).